We begin with the raw amino-acid sequence, 468 residues long: 3-isopropylmalate dehydratase large subunit (468 aa).

Residues cysteine 349, cysteine 409, and cysteine 412 each contribute to the [4Fe-4S] cluster site.

This sequence belongs to the aconitase/IPM isomerase family. LeuC type 1 subfamily. As to quaternary structure, heterodimer of LeuC and LeuD. [4Fe-4S] cluster serves as cofactor.

The enzyme catalyses (2R,3S)-3-isopropylmalate = (2S)-2-isopropylmalate. It functions in the pathway amino-acid biosynthesis; L-leucine biosynthesis; L-leucine from 3-methyl-2-oxobutanoate: step 2/4. In terms of biological role, catalyzes the isomerization between 2-isopropylmalate and 3-isopropylmalate, via the formation of 2-isopropylmaleate. This is 3-isopropylmalate dehydratase large subunit from Jannaschia sp. (strain CCS1).